The chain runs to 188 residues: Calcium load-activated calcium channel (188 aa).

At M1 to M4 the chain is on the lumenal side. A helical transmembrane segment spans residues F5–R32. Residues R32 to K89 are a coiled coil. At T33–V86 the chain is on the cytoplasmic side. Phosphoserine is present on S60. Residues R87–N106 traverse the membrane as a helical segment. Residues S107–T120 lie on the Lumenal side of the membrane. An intramembrane segment occupies P121–H130. Over R131–D140 the chain is Lumenal. The helical transmembrane segment at C141 to L162 threads the bilayer. At G163–S188 the chain is on the cytoplasmic side. S188 is subject to Phosphoserine.

This sequence belongs to the TMCO1 family. Homodimer and homotetramer. Homodimer under resting conditions; forms homotetramers following ER calcium overload. Component of the GET- and EMC-like (GEL) complex, composed of RAB5IF/OPTI and TMCO1. The GEL complex is part of the multi-pass translocon (MPT) complex, composed of three subcomplexes, the GEL complex (composed of RAB5IF/OPTI and TMCO1), the BOS complex (composed of NCLN/Nicalin, NOMO1 and TMEM147) and the PAT complex (composed of WDR83OS/Asterix and CCDC47). The MPT complex associates with the SEC61 complex.

It localises to the endoplasmic reticulum membrane. The protein localises to the golgi apparatus membrane. It is found in the mitochondrion membrane. The catalysed reaction is Ca(2+)(in) = Ca(2+)(out). Endoplasmic reticulum (ER) calcium-selective channel preventing intracellular Ca2(+) stores from overfilling and maintaining calcium homeostasis in the ER. In response to endoplasmic reticulum (ER) Ca2(+) overloading, assembles into a homotetramer, forming a functional calcium-selective channel facilitating Ca2(+) release. Mediates ER Ca2(+) homeostasis in osteoblasts and plays a key role in bone formation, via the CaMKII-HDAC4-RUNX2 signaling axis. Component of the multi-pass translocon (MPT) complex that mediates insertion of multi-pass membrane proteins into the lipid bilayer of membranes. The MPT complex takes over after the SEC61 complex: following membrane insertion of the first few transmembrane segments of proteins by the SEC61 complex, the MPT complex occludes the lateral gate of the SEC61 complex to promote insertion of subsequent transmembrane regions. Within the MPT complex, the GEL subcomplex may mediate insertion of transmembrane regions into the membrane. This chain is Calcium load-activated calcium channel, found in Bos taurus (Bovine).